Consider the following 92-residue polypeptide: C-C motif chemokine 4 (92 aa).

The signal sequence occupies residues 1–23; sequence MKLCVTVLSLLMLVAAFCSPALS. Cystine bridges form between Cys-34–Cys-58 and Cys-35–Cys-74.

This sequence belongs to the intercrine beta (chemokine CC) family. In terms of assembly, homodimer and heterodimer of MIP-1-alpha(4-69) and MIP-1-beta(3-69). In terms of processing, N-terminal processed form MIP-1-beta(3-69) is produced by proteolytic cleavage after secretion from peripheral blood lymphocytes.

It localises to the secreted. Monokine with inflammatory and chemokinetic properties. Binds to CCR5. One of the major HIV-suppressive factors produced by CD8+ T-cells. Recombinant MIP-1-beta induces a dose-dependent inhibition of different strains of HIV-1, HIV-2, and simian immunodeficiency virus (SIV). The processed form MIP-1-beta(3-69) retains the abilities to induce down-modulation of surface expression of the chemokine receptor CCR5 and to inhibit the CCR5-mediated entry of HIV-1 in T-cells. MIP-1-beta(3-69) is also a ligand for CCR1 and CCR2 isoform B. In Homo sapiens (Human), this protein is C-C motif chemokine 4 (CCL4).